A 185-amino-acid chain; its full sequence is Elongation factor P (185 aa).

The protein belongs to the elongation factor P family.

It localises to the cytoplasm. The protein operates within protein biosynthesis; polypeptide chain elongation. Its function is as follows. Involved in peptide bond synthesis. Stimulates efficient translation and peptide-bond synthesis on native or reconstituted 70S ribosomes in vitro. Probably functions indirectly by altering the affinity of the ribosome for aminoacyl-tRNA, thus increasing their reactivity as acceptors for peptidyl transferase. This Kosmotoga olearia (strain ATCC BAA-1733 / DSM 21960 / TBF 19.5.1) protein is Elongation factor P.